An 869-amino-acid chain; its full sequence is Alanine--tRNA ligase (869 aa).

Residues His559, His563, Cys660, and His664 each contribute to the Zn(2+) site.

This sequence belongs to the class-II aminoacyl-tRNA synthetase family. It depends on Zn(2+) as a cofactor.

Its subcellular location is the cytoplasm. It catalyses the reaction tRNA(Ala) + L-alanine + ATP = L-alanyl-tRNA(Ala) + AMP + diphosphate. In terms of biological role, catalyzes the attachment of alanine to tRNA(Ala) in a two-step reaction: alanine is first activated by ATP to form Ala-AMP and then transferred to the acceptor end of tRNA(Ala). Also edits incorrectly charged Ser-tRNA(Ala) and Gly-tRNA(Ala) via its editing domain. The chain is Alanine--tRNA ligase from Janthinobacterium sp. (strain Marseille) (Minibacterium massiliensis).